The sequence spans 815 residues: Bifunctional purine biosynthetic protein purD (815 aa).

Residues 6 to 452 (NILVIGSGSR…YRKDIGQKAL (447 aa)) form a GARS region. An ATP-grasp domain is found at 113–343 (KDFMARNNIP…LFEIVLACIE (231 aa)). ATP is bound at residue 139 to 200 (IESLNYKIVL…EEFLDGEECS (62 aa)). The Mg(2+) site is built by Glu-313 and Asn-315. Residues 469–801 (VSYSESGVDI…KVYKIGKIIN (333 aa)) form an AIRS region.

It in the N-terminal section; belongs to the GARS family. In the C-terminal section; belongs to the AIR synthase family. Mg(2+) serves as cofactor. The cofactor is Mn(2+).

The protein resides in the cytoplasm. It is found in the cytosol. It catalyses the reaction 5-phospho-beta-D-ribosylamine + glycine + ATP = N(1)-(5-phospho-beta-D-ribosyl)glycinamide + ADP + phosphate + H(+). The catalysed reaction is 2-formamido-N(1)-(5-O-phospho-beta-D-ribosyl)acetamidine + ATP = 5-amino-1-(5-phospho-beta-D-ribosyl)imidazole + ADP + phosphate + H(+). It functions in the pathway purine metabolism; IMP biosynthesis via de novo pathway; 5-amino-1-(5-phospho-D-ribosyl)imidazole from N(2)-formyl-N(1)-(5-phospho-D-ribosyl)glycinamide: step 2/2. It participates in purine metabolism; IMP biosynthesis via de novo pathway; N(1)-(5-phospho-D-ribosyl)glycinamide from 5-phospho-alpha-D-ribose 1-diphosphate: step 2/2. Catalyzes the second and fifth step in the 'de novo' purine biosynthesis pathway; contains phosphoribosylamine--glycine ligase (GARS) and phosphoribosylformylglycinamidine cyclo-ligase (AIRS) activities. The sequence is that of Bifunctional purine biosynthetic protein purD (purD) from Dictyostelium discoideum (Social amoeba).